Here is a 208-residue protein sequence, read N- to C-terminus: High frequency lysogenization protein HflD homolog (208 aa).

Belongs to the HflD family.

It localises to the cytoplasm. It is found in the cell inner membrane. This Pseudomonas putida (strain ATCC 700007 / DSM 6899 / JCM 31910 / BCRC 17059 / LMG 24140 / F1) protein is High frequency lysogenization protein HflD homolog.